Consider the following 287-residue polypeptide: ATP synthase gamma chain (287 aa).

It belongs to the ATPase gamma chain family. In terms of assembly, F-type ATPases have 2 components, CF(1) - the catalytic core - and CF(0) - the membrane proton channel. CF(1) has five subunits: alpha(3), beta(3), gamma(1), delta(1), epsilon(1). CF(0) has three main subunits: a, b and c.

It localises to the cell inner membrane. Functionally, produces ATP from ADP in the presence of a proton gradient across the membrane. The gamma chain is believed to be important in regulating ATPase activity and the flow of protons through the CF(0) complex. This chain is ATP synthase gamma chain, found in Marinobacter nauticus (strain ATCC 700491 / DSM 11845 / VT8) (Marinobacter aquaeolei).